Reading from the N-terminus, the 408-residue chain is Two-pore potassium channel 5 (408 aa).

2 disordered regions span residues 1-29 (MEPL…SASI) and 58-82 (QSVQ…SQTR). Residues 15–29 (PIPENPSSSSSSASI) show a composition bias toward low complexity. The Stromal portion of the chain corresponds to 22–115 (SSSSSASITI…TKKPSPVSKS (94 aa)). The span at 63 to 72 (DKEDQDSDSD) shows a compositional bias: acidic residues. A helical membrane pass occupies residues 116–136 (IIRQAIFLLIVYLTLGVSIYS). Positions 152-171 (DALYFCIVTMCTIGYGDIAP) form an intramembrane region, pore-forming. Residues 178 to 198 (IFAVVFVLFGFGFLDILLSGV) traverse the membrane as a helical segment. The Stromal portion of the chain corresponds to 199–248 (VNYVLDLQESMILTGIQTRQHHQHHHHHRFSAKDYIIDFEKGRMRIRMKV). The chain crosses the membrane as a helical span at residues 249–269 (CLALCVVVLCIGVGALVLHFV). The segment at residues 276–295 (DSVYLSVMSVTTVGYGDRAF) is an intramembrane region (pore-forming). A helical membrane pass occupies residues 302–322 (LFAAVWLLVSTLAVARAFLYL). Topologically, residues 323-408 (AEARIDRRHR…TLPDLLGDPL (86 aa)) are stromal. 2 consecutive EF-hand domains span residues 339–374 (LNRE…EMGK) and 378–408 (KDID…GDPL). The Ca(2+) site is built by D352, E363, D391, N393, K397, and D402.

The protein belongs to the two pore domain potassium channel (TC 1.A.1.7) family. As to quaternary structure, homodimer. Expressed in hydathodes and the vascular tissues of roots, stems, leaves and flowers.

The protein resides in the vacuole membrane. Its function is as follows. Probable voltage-independent potassium-selective tonoplast ion channel. This Arabidopsis thaliana (Mouse-ear cress) protein is Two-pore potassium channel 5 (TPK5).